A 472-amino-acid polypeptide reads, in one-letter code: Coronin-6 (472 aa).

WD repeat units lie at residues 79-119, 129-169, 173-212, 216-259, and 264-304; these read GHTG…PVRN, GHSK…VLLS, IHPDVIHSVCWNSNGSLLATTCKDKTLRIIDPRKSQVVAE, AHEG…EPVA, and DTSN…PFVH. The disordered stretch occupies residues 409–434; the sequence is NILDVRPPASPRRSQSASEAPLSQQH. Positions 419–429 are enriched in low complexity; the sequence is PRRSQSASEAP. Positions 430–469 form a coiled coil; that stretch reads LSQQHTLETLLEEMKALRERVQAQEERITALENMLCELVD.

This is Coronin-6 (Coro6) from Rattus norvegicus (Rat).